Reading from the N-terminus, the 79-residue chain is Acyl carrier protein (79 aa).

The Carrier domain occupies Ser2–Ala77. Ser37 carries the post-translational modification O-(pantetheine 4'-phosphoryl)serine.

This sequence belongs to the acyl carrier protein (ACP) family. 4'-phosphopantetheine is transferred from CoA to a specific serine of apo-ACP by AcpS. This modification is essential for activity because fatty acids are bound in thioester linkage to the sulfhydryl of the prosthetic group.

Its subcellular location is the cytoplasm. It functions in the pathway lipid metabolism; fatty acid biosynthesis. Its function is as follows. Carrier of the growing fatty acid chain in fatty acid biosynthesis. This Methylibium petroleiphilum (strain ATCC BAA-1232 / LMG 22953 / PM1) protein is Acyl carrier protein.